Consider the following 60-residue polypeptide: Large ribosomal subunit protein bL33 (60 aa).

The protein belongs to the bacterial ribosomal protein bL33 family.

The sequence is that of Large ribosomal subunit protein bL33 from Chlorobium phaeovibrioides (strain DSM 265 / 1930) (Prosthecochloris vibrioformis (strain DSM 265)).